The chain runs to 375 residues: Protein kinase MCK1 (375 aa).

Serine 2 is subject to N-acetylserine. The Protein kinase domain occupies 35–327 (VKEYRKIGRG…PRRILAHQFF (293 aa)). Residues 41-49 (IGRGAFGTV) and lysine 68 contribute to the ATP site. Catalysis depends on aspartate 164, which acts as the Proton acceptor. Serine 198 carries the phosphoserine modification. The residue at position 199 (tyrosine 199) is a Phosphotyrosine. Serine 202 carries the post-translational modification Phosphoserine.

This sequence belongs to the protein kinase superfamily. Ser/Thr protein kinase family. Post-translationally, phosphorylated at tyrosine and serine.

The enzyme catalyses L-seryl-[protein] + ATP = O-phospho-L-seryl-[protein] + ADP + H(+). It carries out the reaction L-threonyl-[protein] + ATP = O-phospho-L-threonyl-[protein] + ADP + H(+). It catalyses the reaction L-tyrosyl-[protein] + ATP = O-phospho-L-tyrosyl-[protein] + ADP + H(+). May be an autophosphorylating tyrosine kinase, a bifunctional (serine/tyrosine-specific) protein kinase, or a serine kinase that is a substrate for an associated tyrosine kinase. MCK1 is a transcriptional activator of IME1, it stimulates spore maturation, and play a positive regulatory role in both mitotic centromere function and activation of early meiotic gene expression. In Saccharomyces cerevisiae (strain ATCC 204508 / S288c) (Baker's yeast), this protein is Protein kinase MCK1 (MCK1).